The sequence spans 88 residues: Small ribosomal subunit protein uS15c (88 aa).

This sequence belongs to the universal ribosomal protein uS15 family. As to quaternary structure, part of the 30S ribosomal subunit.

It localises to the plastid. It is found in the chloroplast. The sequence is that of Small ribosomal subunit protein uS15c (rps15) from Lobularia maritima (Sweet alyssum).